A 284-amino-acid chain; its full sequence is 2-dehydro-3-deoxyphosphooctonate aldolase (284 aa).

This sequence belongs to the KdsA family.

Its subcellular location is the cytoplasm. The enzyme catalyses D-arabinose 5-phosphate + phosphoenolpyruvate + H2O = 3-deoxy-alpha-D-manno-2-octulosonate-8-phosphate + phosphate. Its pathway is carbohydrate biosynthesis; 3-deoxy-D-manno-octulosonate biosynthesis; 3-deoxy-D-manno-octulosonate from D-ribulose 5-phosphate: step 2/3. The protein operates within bacterial outer membrane biogenesis; lipopolysaccharide biosynthesis. In Paraburkholderia xenovorans (strain LB400), this protein is 2-dehydro-3-deoxyphosphooctonate aldolase.